The chain runs to 402 residues: uncharacterized protein (402 aa).

12 helical membrane-spanning segments follow: residues 11–31 (LALA…IDMY), 48–68 (LVQL…LIVG), 80–100 (LLIC…SPNI), 108–125 (FLQG…RAIV), 140–160 (LLMV…GAIL), 167–187 (WHTI…LIAL), 219–239 (FMGY…YVSG), 254–274 (VFSI…FIIG), 286–306 (LRIA…MTMI), 308–328 (GPLA…GMVL), 347–367 (SALL…LVGI), and 373–393 (VPMG…FFGL).

This sequence belongs to the major facilitator superfamily. Bcr/CmlA family.

Its subcellular location is the cell membrane. This is an uncharacterized protein from Bacillus subtilis (strain 168).